We begin with the raw amino-acid sequence, 115 residues long: Nucleoid-associated protein Rpic_1036 (115 aa).

This sequence belongs to the YbaB/EbfC family. Homodimer.

It localises to the cytoplasm. It is found in the nucleoid. In terms of biological role, binds to DNA and alters its conformation. May be involved in regulation of gene expression, nucleoid organization and DNA protection. The polypeptide is Nucleoid-associated protein Rpic_1036 (Ralstonia pickettii (strain 12J)).